An 88-amino-acid chain; its full sequence is Alpha-latrotoxin-associated low molecular weight protein (88 aa).

Positions 1-18 (MSKLFFVVFLCLIISVFA) are cleaved as a signal peptide.

It belongs to the arthropod CHH/MIH/GIH/VIH hormone family. As to expression, expressed by the venom gland.

The protein localises to the secreted. In terms of biological role, may increase the toxicity of alpha-latrotoxin and/or other venom components. Is non-toxic to mice and to the cockroach Periplaneta americana. The polypeptide is Alpha-latrotoxin-associated low molecular weight protein (Latrodectus tredecimguttatus (Mediterranean black widow spider)).